We begin with the raw amino-acid sequence, 440 residues long: Xaa-Pro dipeptidase (440 aa).

Residues Asp-244, Asp-255, His-335, Glu-380, and Glu-419 each contribute to the Mn(2+) site.

Belongs to the peptidase M24B family. Bacterial-type prolidase subfamily. Mn(2+) is required as a cofactor.

It catalyses the reaction Xaa-L-Pro dipeptide + H2O = an L-alpha-amino acid + L-proline. In terms of biological role, splits dipeptides with a prolyl residue in the C-terminal position. In Shewanella piezotolerans (strain WP3 / JCM 13877), this protein is Xaa-Pro dipeptidase.